We begin with the raw amino-acid sequence, 392 residues long: Putative glutamate--cysteine ligase 2 (392 aa).

The interval 347-367 (AARKHGAAPEPGTRTRGDDGV) is disordered.

Belongs to the glutamate--cysteine ligase type 2 family. YbdK subfamily.

It carries out the reaction L-cysteine + L-glutamate + ATP = gamma-L-glutamyl-L-cysteine + ADP + phosphate + H(+). ATP-dependent carboxylate-amine ligase which exhibits weak glutamate--cysteine ligase activity. This Corynebacterium jeikeium (strain K411) protein is Putative glutamate--cysteine ligase 2.